The following is a 45-amino-acid chain: Cytochrome b559 subunit beta (45 aa).

A helical transmembrane segment spans residues 20–36 (WLALHTLGIPTVFFLGA). H24 is a binding site for heme.

It belongs to the PsbE/PsbF family. Heterodimer of an alpha subunit and a beta subunit. PSII is composed of 1 copy each of membrane proteins PsbA, PsbB, PsbC, PsbD, PsbE, PsbF, PsbH, PsbI, PsbJ, PsbK, PsbL, PsbM, PsbT, PsbX, PsbY, PsbZ, Psb30/Ycf12, peripheral proteins PsbO, CyanoQ (PsbQ), PsbU, PsbV and a large number of cofactors. It forms dimeric complexes. Heme b serves as cofactor.

It localises to the cellular thylakoid membrane. In terms of biological role, this b-type cytochrome is tightly associated with the reaction center of photosystem II (PSII). PSII is a light-driven water:plastoquinone oxidoreductase that uses light energy to abstract electrons from H(2)O, generating O(2) and a proton gradient subsequently used for ATP formation. It consists of a core antenna complex that captures photons, and an electron transfer chain that converts photonic excitation into a charge separation. The protein is Cytochrome b559 subunit beta of Synechococcus sp. (strain CC9902).